The following is a 209-amino-acid chain: COP9 signalosome complex subunit 8 (209 aa).

The region spanning 8–179 (ESAFSFKKLL…GALDVSFNKF (172 aa)) is the PCI domain. S175 bears the Phosphoserine mark.

It belongs to the CSN8 family. As to quaternary structure, component of the CSN complex, composed of COPS1/GPS1, COPS2, COPS3, COPS4, COPS5, COPS6, COPS7 (COPS7A or COPS7B), COPS8 and COPS9 isoform 1. In the complex, it probably interacts directly with COPS3, COPS4 and COPS7 (COPS7A or COPS7B).

It localises to the cytoplasm. The protein resides in the nucleus. Its function is as follows. Component of the COP9 signalosome complex (CSN), a complex involved in various cellular and developmental processes. The CSN complex is an essential regulator of the ubiquitin (Ubl) conjugation pathway by mediating the deneddylation of the cullin subunits of SCF-type E3 ligase complexes, leading to decrease the Ubl ligase activity of SCF-type complexes such as SCF, CSA or DDB2. The complex is also involved in phosphorylation of p53/TP53, c-jun/JUN, IkappaBalpha/NFKBIA, ITPK1 and IRF8/ICSBP, possibly via its association with CK2 and PKD kinases. CSN-dependent phosphorylation of TP53 and JUN promotes and protects degradation by the Ubl system, respectively. This Homo sapiens (Human) protein is COP9 signalosome complex subunit 8 (COPS8).